A 202-amino-acid chain; its full sequence is Probable ATP-dependent Clp protease proteolytic subunit 3 (202 aa).

Catalysis depends on S101, which acts as the Nucleophile. Residue H126 is part of the active site.

It belongs to the peptidase S14 family. In terms of assembly, fourteen ClpP subunits assemble into 2 heptameric rings which stack back to back to give a disk-like structure with a central cavity, resembling the structure of eukaryotic proteasomes.

It is found in the cytoplasm. It carries out the reaction Hydrolysis of proteins to small peptides in the presence of ATP and magnesium. alpha-casein is the usual test substrate. In the absence of ATP, only oligopeptides shorter than five residues are hydrolyzed (such as succinyl-Leu-Tyr-|-NHMec, and Leu-Tyr-Leu-|-Tyr-Trp, in which cleavage of the -Tyr-|-Leu- and -Tyr-|-Trp bonds also occurs).. Functionally, cleaves peptides in various proteins in a process that requires ATP hydrolysis. Has a chymotrypsin-like activity. Plays a major role in the degradation of misfolded proteins. This is Probable ATP-dependent Clp protease proteolytic subunit 3 from Synechocystis sp. (strain ATCC 27184 / PCC 6803 / Kazusa).